The chain runs to 196 residues: Probable thymidylate kinase (196 aa).

Position 9–16 (9–16 (GIDGSGKT)) interacts with ATP.

This sequence belongs to the thymidylate kinase family.

The catalysed reaction is dTMP + ATP = dTDP + ADP. This is Probable thymidylate kinase from Methanococcus aeolicus (strain ATCC BAA-1280 / DSM 17508 / OCM 812 / Nankai-3).